The sequence spans 394 residues: Elongation factor Tu (394 aa).

One can recognise a tr-type G domain in the interval 10 to 204; the sequence is KPHINVGTIG…FLDTYIPEPK (195 aa). Residues 19–26 form a G1 region; it reads GHVDHGKT. Residue 19 to 26 coordinates GTP; sequence GHVDHGKT. T26 contacts Mg(2+). The tract at residues 60–64 is G2; sequence GITIN. Positions 81 to 84 are G3; the sequence is DCPG. GTP contacts are provided by residues 81–85 and 136–139; these read DCPGH and NKCD. Positions 136 to 139 are G4; the sequence is NKCD. The segment at 174-176 is G5; that stretch reads SAL.

The protein belongs to the TRAFAC class translation factor GTPase superfamily. Classic translation factor GTPase family. EF-Tu/EF-1A subfamily. As to quaternary structure, monomer.

Its subcellular location is the cytoplasm. It carries out the reaction GTP + H2O = GDP + phosphate + H(+). GTP hydrolase that promotes the GTP-dependent binding of aminoacyl-tRNA to the A-site of ribosomes during protein biosynthesis. This is Elongation factor Tu from Buchnera aphidicola subsp. Schizaphis graminum (strain Sg).